Consider the following 248-residue polypeptide: Meiotic drive suppressor wtf1 (248 aa).

The segment at 30-68 (LLPEYNSDEESTLPPYSDHARVSNPPNTHRENHSSGTTD) is disordered. The next 4 helical transmembrane spans lie at 73 to 93 (FLIK…PAVC), 110 to 130 (WTLI…SWYF), 152 to 172 (IPMA…PRVT), and 186 to 206 (SLAD…VETV).

The protein belongs to the WTF family. In terms of assembly, homomer. Interacts with other proteins that exhibit high sequence similarity.

Its subcellular location is the spore membrane. It is found in the vacuole membrane. In terms of biological role, acts as a suppressor component of the dual wtf meiotic drive system, and can suppress but not confer meiotic drive by compatible poisons. Wtf meiotic drive systems promote unequal transmission of alleles from the parental zygote to progeny spores by encoding a poison and an antidote from the same locus; the poison is trans-acting and forms toxic aggregates in all spores within an ascus, wherease the antidote is spore-specific and targets aggregates for degradation by the vacuole. Meiotic drive by wtf systems therefore lead to poisoning of all progeny that do not inherit the dual poison/antidote allele, or express a compatible antidote. This chain is Meiotic drive suppressor wtf1, found in Schizosaccharomyces pombe (Fission yeast).